We begin with the raw amino-acid sequence, 93 residues long: RNA-binding protein Hfq (93 aa).

Residues 9 to 68 enclose the Sm domain; it reads DPFLNALRRERVPVSIYLVNGIKLQGQVESFDQFVILLKNTVSQMVYKHAISTVVPARPF. The interval 70 to 93 is disordered; it reads VNSHTAAPSPAGGFNGQQDDNNDQ.

This sequence belongs to the Hfq family. Homohexamer.

In terms of biological role, RNA chaperone that binds small regulatory RNA (sRNAs) and mRNAs to facilitate mRNA translational regulation in response to envelope stress, environmental stress and changes in metabolite concentrations. Also binds with high specificity to tRNAs. This chain is RNA-binding protein Hfq, found in Shewanella sediminis (strain HAW-EB3).